A 403-amino-acid chain; its full sequence is RUN domain-containing protein 3B (403 aa).

A disordered region spans residues 1-20 (MASRSLGGLSGSRGGGKKSL). An Omega-N-methylarginine modification is found at Arg13. Residues 53–185 (DDSSPEFNNF…IDFSFCLKGE (133 aa)) enclose the RUN domain. Residues 207-232 (SDSISSDEEELRTFGSSDSEGSTPEN) form a disordered region. Phosphoserine occurs at positions 211 and 212. A compositionally biased stretch (polar residues) spans 220-231 (FGSSDSEGSTPE). Positions 296-321 (AHKLEKEQLEYIIVELQDQLKSYQSL) form a coiled coil.

The protein belongs to the RUNDC3 family. Interacts with RAP2A.

The polypeptide is RUN domain-containing protein 3B (Rundc3b) (Rattus norvegicus (Rat)).